The chain runs to 293 residues: Ribosomal RNA small subunit methyltransferase H (293 aa).

S-adenosyl-L-methionine-binding positions include 32–34 (GGH), Asp-51, Phe-78, Asp-99, and Gln-106. The segment at 271 to 293 (PGTEEIRENPPSRSAKLRVAKRI) is disordered.

It belongs to the methyltransferase superfamily. RsmH family.

The protein resides in the cytoplasm. The catalysed reaction is cytidine(1402) in 16S rRNA + S-adenosyl-L-methionine = N(4)-methylcytidine(1402) in 16S rRNA + S-adenosyl-L-homocysteine + H(+). Specifically methylates the N4 position of cytidine in position 1402 (C1402) of 16S rRNA. The sequence is that of Ribosomal RNA small subunit methyltransferase H from Persephonella marina (strain DSM 14350 / EX-H1).